The chain runs to 579 residues: Arginine--tRNA ligase (579 aa).

Residues 127-137 carry the 'HIGH' region motif; sequence PNLAKEMHVGH.

Belongs to the class-I aminoacyl-tRNA synthetase family. As to quaternary structure, monomer.

The protein resides in the cytoplasm. The enzyme catalyses tRNA(Arg) + L-arginine + ATP = L-arginyl-tRNA(Arg) + AMP + diphosphate. The sequence is that of Arginine--tRNA ligase from Azotobacter vinelandii (strain DJ / ATCC BAA-1303).